We begin with the raw amino-acid sequence, 487 residues long: 3-octaprenyl-4-hydroxybenzoate carboxy-lyase (487 aa).

A Mn(2+)-binding site is contributed by Asn-172. Prenylated FMN is bound by residues 175–177, 189–191, and 194–195; these read IYR, RWL, and RG. Mn(2+) is bound at residue Glu-238. Asp-287 acts as the Proton donor in catalysis.

Belongs to the UbiD family. In terms of assembly, homohexamer. Prenylated FMN serves as cofactor. It depends on Mn(2+) as a cofactor.

The protein resides in the cell membrane. The catalysed reaction is a 4-hydroxy-3-(all-trans-polyprenyl)benzoate + H(+) = a 2-(all-trans-polyprenyl)phenol + CO2. The protein operates within cofactor biosynthesis; ubiquinone biosynthesis. Functionally, catalyzes the decarboxylation of 3-octaprenyl-4-hydroxy benzoate to 2-octaprenylphenol, an intermediate step in ubiquinone biosynthesis. In Actinobacillus pleuropneumoniae serotype 3 (strain JL03), this protein is 3-octaprenyl-4-hydroxybenzoate carboxy-lyase.